The following is a 268-amino-acid chain: uncharacterized protein (268 aa).

The disordered stretch occupies residues 45-64; it reads SDTQGPAPGINGQGKPSPGA.

This is an uncharacterized protein from Aquifex aeolicus (strain VF5).